Reading from the N-terminus, the 190-residue chain is Large ribosomal subunit protein uL5 (190 aa).

Belongs to the universal ribosomal protein uL5 family. Part of the 50S ribosomal subunit; part of the 5S rRNA/L5/L18/L25 subcomplex. Contacts the 5S rRNA and the P site tRNA. Forms a bridge to the 30S subunit in the 70S ribosome.

In terms of biological role, this is one of the proteins that bind and probably mediate the attachment of the 5S RNA into the large ribosomal subunit, where it forms part of the central protuberance. In the 70S ribosome it contacts protein S13 of the 30S subunit (bridge B1b), connecting the 2 subunits; this bridge is implicated in subunit movement. Contacts the P site tRNA; the 5S rRNA and some of its associated proteins might help stabilize positioning of ribosome-bound tRNAs. The polypeptide is Large ribosomal subunit protein uL5 (Blochmanniella floridana).